Consider the following 385-residue polypeptide: Homoserine O-succinyltransferase (385 aa).

In terms of domain architecture, AB hydrolase-1 spans 45-355; it reads NAVLVCHALN…SHGHDAFLLD (311 aa). Serine 151 (nucleophile) is an active-site residue. Arginine 221 is a substrate binding site. Catalysis depends on residues aspartate 316 and histidine 349. Position 350 (aspartate 350) interacts with substrate.

The protein belongs to the AB hydrolase superfamily. MetX family. As to quaternary structure, homodimer.

It localises to the cytoplasm. It catalyses the reaction L-homoserine + succinyl-CoA = O-succinyl-L-homoserine + CoA. The protein operates within amino-acid biosynthesis; L-methionine biosynthesis via de novo pathway; O-succinyl-L-homoserine from L-homoserine: step 1/1. Functionally, transfers a succinyl group from succinyl-CoA to L-homoserine, forming succinyl-L-homoserine. In Herminiimonas arsenicoxydans, this protein is Homoserine O-succinyltransferase.